Reading from the N-terminus, the 273-residue chain is Dermonecrotic toxin LspaSicTox-alphaIA2iii (273 aa).

His5 is a catalytic residue. The Mg(2+) site is built by Glu25 and Asp27. His41 (nucleophile) is an active-site residue. Intrachain disulfides connect Cys45/Cys51 and Cys47/Cys190. Asp85 lines the Mg(2+) pocket.

Belongs to the arthropod phospholipase D family. Class II subfamily. Requires Mg(2+) as cofactor. Expressed by the venom gland.

The protein resides in the secreted. The enzyme catalyses an N-(acyl)-sphingosylphosphocholine = an N-(acyl)-sphingosyl-1,3-cyclic phosphate + choline. The catalysed reaction is an N-(acyl)-sphingosylphosphoethanolamine = an N-(acyl)-sphingosyl-1,3-cyclic phosphate + ethanolamine. It catalyses the reaction a 1-acyl-sn-glycero-3-phosphocholine = a 1-acyl-sn-glycero-2,3-cyclic phosphate + choline. It carries out the reaction a 1-acyl-sn-glycero-3-phosphoethanolamine = a 1-acyl-sn-glycero-2,3-cyclic phosphate + ethanolamine. Functionally, dermonecrotic toxins cleave the phosphodiester linkage between the phosphate and headgroup of certain phospholipids (sphingolipid and lysolipid substrates), forming an alcohol (often choline) and a cyclic phosphate. This toxin acts on sphingomyelin (SM). It may also act on ceramide phosphoethanolamine (CPE), lysophosphatidylcholine (LPC) and lysophosphatidylethanolamine (LPE), but not on lysophosphatidylserine (LPS), and lysophosphatidylglycerol (LPG). It acts by transphosphatidylation, releasing exclusively cyclic phosphate products as second products. Induces dermonecrosis, hemolysis, increased vascular permeability, edema, inflammatory response, and platelet aggregation. In Loxosceles spadicea (Recluse spider), this protein is Dermonecrotic toxin LspaSicTox-alphaIA2iii.